The following is a 259-amino-acid chain: Archaerhodopsin-2 (259 aa).

A propeptide spanning residues Met1–Leu6 is cleaved from the precursor. Gln7 carries the post-translational modification Pyrrolidone carboxylic acid. The Extracellular portion of the chain corresponds to Gln7–Pro18. Residues Glu19–Arg40 form a helical membrane-spanning segment. Over Gly41–Ala49 the chain is Cytoplasmic. The chain crosses the membrane as a helical span at residues Arg50 to Phe71. Residues Phe72–Tyr90 are Extracellular-facing. Residues Tyr91–Ala112 form a helical membrane-spanning segment. Residues Lys113–Asp115 are Cytoplasmic-facing. A helical transmembrane segment spans residues Arg116–Leu138. The Extracellular portion of the chain corresponds to Ser139–Pro142. Residues Leu143 to Ala171 traverse the membrane as a helical segment. The Cytoplasmic portion of the chain corresponds to Ala172–Arg174. A helical transmembrane segment spans residues Ser175–Gly203. Over Thr204–Gly211 the chain is Extracellular. The chain crosses the membrane as a helical span at residues Leu212–Thr244. Lys227 is modified (N6-(retinylidene)lysine). The Cytoplasmic segment spans residues Glu245–Asp259.

This sequence belongs to the archaeal/bacterial/fungal opsin family.

It is found in the cell membrane. In terms of biological role, light-driven proton pump. It may interact with bacterioruberin in the claret membrane. In Halobacterium sp. (strain aus-2), this protein is Archaerhodopsin-2.